The chain runs to 397 residues: MSESVHTNPSLYSKGMLAVICAQFLSAFGDNALLFATLALMKQLYYPEWSQPVLQMLFVGAYILFAPFVGQFADSFAKGRVMMVANGLKLLGAGCICFGVNPFIGYTLVGIGAAAYSPAKYGILGELTTGDKLVKANGLMESSTIAAILLGSMAGGILADWHVLAALIVCALVYGGAVVANLWIPRLPAARPGQSWRFKPMTHSFFSACRTLWRNGETRFSLMGTSLFWGAGVTLRFLLVIWVPVALGITSNAMPTYLNAMVAVGIVLGAGAAAKLVTLETVSRCMPAGILIGIAVMAFAVQQSLLPAFGLLLLLGVFGGFFIVPLNALLQERGKHSVGAGNAIAVQNLGENVAMLLMLGLYSLAVSVGVPPVAVGIGFGAVFAVAIAALWVWGRRK.

11 helical membrane passes run 16–36 (MLAV…LLFA), 53–73 (VLQM…GQFA), 91–111 (LGAG…LVGI), 139–159 (LMES…GILA), 164–184 (LAAL…NLWI), 227–247 (LFWG…PVAL), 253–273 (AMPT…AGAA), 281–301 (TVSR…AFAV), 305–325 (LLPA…FIVP), 352–372 (NVAM…GVPP), and 373–393 (VAVG…LWVW).

The protein belongs to the major facilitator superfamily. LplT (TC 2.A.1.42) family.

Its subcellular location is the cell inner membrane. Functionally, catalyzes the facilitated diffusion of 2-acyl-glycero-3-phosphoethanolamine (2-acyl-GPE) into the cell. In Klebsiella pneumoniae (strain 342), this protein is Lysophospholipid transporter LplT.